Here is a 383-residue protein sequence, read N- to C-terminus: Lipid-A-disaccharide synthase (383 aa).

Belongs to the LpxB family.

The catalysed reaction is a lipid X + a UDP-2-N,3-O-bis[(3R)-3-hydroxyacyl]-alpha-D-glucosamine = a lipid A disaccharide + UDP + H(+). Its pathway is bacterial outer membrane biogenesis; LPS lipid A biosynthesis. Functionally, condensation of UDP-2,3-diacylglucosamine and 2,3-diacylglucosamine-1-phosphate to form lipid A disaccharide, a precursor of lipid A, a phosphorylated glycolipid that anchors the lipopolysaccharide to the outer membrane of the cell. The chain is Lipid-A-disaccharide synthase from Aliivibrio fischeri (strain ATCC 700601 / ES114) (Vibrio fischeri).